We begin with the raw amino-acid sequence, 1557 residues long: ABC transporter atnG (1557 aa).

5 helical membrane-spanning segments follow: residues 27–47 (FTLY…LILA), 70–90 (LKLL…AFWM), 99–119 (LTIA…YLIH), 131–151 (IISI…RTIW), and 159–179 (VSAI…LETW). N-linked (GlcNAc...) asparagine glycans are attached at residues Asn-202 and Asn-249. A run of 6 helical transmembrane segments spans residues 256–276 (AGAM…AGVF), 311–331 (ATLL…ATAT), 385–405 (YIHD…LLYN), 412–432 (IAPI…AMMA), 490–510 (LLIA…IVSF), and 531–551 (LTSL…VESI). Positions 279-556 (LCQSGFIISQ…LVESISETAM (278 aa)) constitute an ABC transmembrane type-1 1 domain. Residues 593–829 (AFEVDVGWKN…LDYIQGFAIA (237 aa)) enclose the ABC transporter 1 domain. An ATP-binding site is contributed by 625-632 (GAVGCGKT). The N-linked (GlcNAc...) asparagine glycan is linked to Asn-667. A helical transmembrane segment spans residues 882–902 (LVYFGLMAIFVFLQAFPTVWV). In terms of domain architecture, ABC transmembrane type-1 2 spans 882–1162 (LVYFGLMAIF…LITDWTVLET (281 aa)). An N-linked (GlcNAc...) asparagine glycan is attached at Asn-916. A run of 4 helical transmembrane segments spans residues 921-941 (IGVY…TACF), 996-1016 (AVLQ…IIAV), 1020-1040 (YITA…TFYM), and 1105-1125 (LSLV…GIAV). Asn-1132 carries an N-linked (GlcNAc...) asparagine glycan. A helical transmembrane segment spans residues 1135-1155 (SLGLALVNVVSLSASVKALIT). Residues 1199–1431 (VEYKNVSAFY…PSVFRELYKS (233 aa)) form the ABC transporter 2 domain. 2 N-linked (GlcNAc...) asparagine glycosylation sites follow: Asn-1203 and Asn-1218. 1233-1240 (GRSGSGKS) is an ATP binding site. Disordered regions lie at residues 1439–1464 (ERQE…EELR) and 1503–1557 (RTRS…RGLH). Over residues 1507-1522 (RSRDHSAERRESKRYS) the composition is skewed to basic and acidic residues.

Belongs to the ABC transporter superfamily. ABCC family. Conjugate transporter (TC 3.A.1.208) subfamily.

It localises to the cell membrane. ABC transporter; part of the gene cluster that mediates the biosynthesis of aspercryptins, linear lipopeptides built from six amino acids including 2 highly unusual and nonproteogenic amino acids, 2-amino-octanoic acid (2aoa) and 2-amino-dodecanol (2adol). The sequence is that of ABC transporter atnG from Emericella nidulans (strain FGSC A4 / ATCC 38163 / CBS 112.46 / NRRL 194 / M139) (Aspergillus nidulans).